An 85-amino-acid chain; its full sequence is U4-theraphotoxin-Hhn1g (85 aa).

Residues 1-22 (MKVTLIAILTCAAVLVLHTTAA) form the signal peptide. Positions 23–48 (EELEAESQLMEVGMPDTELAAVDEER) are excised as a propeptide. Disulfide bonds link Cys-52–Cys-66, Cys-56–Cys-77, and Cys-71–Cys-82.

It belongs to the neurotoxin 12 (Hwtx-2) family. 02 (Hwtx-2) subfamily. In terms of tissue distribution, expressed by the venom gland.

The protein resides in the secreted. Its function is as follows. Postsynaptic neurotoxin. The polypeptide is U4-theraphotoxin-Hhn1g (Cyriopagopus hainanus (Chinese bird spider)).